The chain runs to 252 residues: Indole-3-glycerol phosphate synthase (252 aa).

It belongs to the TrpC family.

It carries out the reaction 1-(2-carboxyphenylamino)-1-deoxy-D-ribulose 5-phosphate + H(+) = (1S,2R)-1-C-(indol-3-yl)glycerol 3-phosphate + CO2 + H2O. The protein operates within amino-acid biosynthesis; L-tryptophan biosynthesis; L-tryptophan from chorismate: step 4/5. The protein is Indole-3-glycerol phosphate synthase of Leptospira interrogans serogroup Icterohaemorrhagiae serovar copenhageni (strain Fiocruz L1-130).